The following is a 161-amino-acid chain: Small ribosomal subunit protein uS9 (161 aa).

Disordered stretches follow at residues 1-27 (MAQI…APKA) and 142-161 (KERK…FSKR).

The protein belongs to the universal ribosomal protein uS9 family.

The protein is Small ribosomal subunit protein uS9 of Clavibacter michiganensis subsp. michiganensis (strain NCPPB 382).